The following is a 294-amino-acid chain: Ankyrin repeat and SOCS box protein 9 (294 aa).

At methionine 1 the chain carries N-acetylmethionine. ANK repeat units follow at residues 35-64 (SDWS…AVNI), 68-97 (DHVS…QVNG), 101-130 (DWHT…SVQP), 133-162 (DLAS…NIDH), 166-195 (HLGT…DVNQ), and 198-227 (GQDS…DTQA). Residue serine 51 is modified to Phosphoserine. An SOCS box domain is found at 240 to 294 (PPESPLAQLFLEREGPPSLMQLCRLRIRKCFGIQQHHKITKLVLPEDLKQFLLHL).

Belongs to the ankyrin SOCS box (ASB) family. As to quaternary structure, substrate-recognition component of the ECS(ASB9) complex, composed of ASB9, CUL5, ELOB, ELOC and RNF7/RBX2. Predominantly expressed in testis, kidney, and liver.

Its subcellular location is the mitochondrion. The protein operates within protein modification; protein ubiquitination. Substrate-recognition component of a cullin-5-RING E3 ubiquitin-protein ligase complex (ECS complex, also named CRL5 complex), which mediates the ubiquitination and subsequent proteasomal degradation of target proteins. The ECS(ASB9) complex catalyzes ubiquitination of creatine kinases CKB and CKMT1A. Functionally, does not interact with the Elongin BC complex, likely to be a negative regulator of isoform 1. This chain is Ankyrin repeat and SOCS box protein 9, found in Homo sapiens (Human).